The following is a 364-amino-acid chain: Protein BRI1-5 ENHANCED 1 (364 aa).

The span at 1 to 11 (MVREEQEEDDN) shows a compositional bias: acidic residues. The disordered stretch occupies residues 1 to 22 (MVREEQEEDDNNNNNNGGGERK). Residues 44–49 (GGSGFV), Arg-69, 98–99 (DL), Tyr-202, Lys-206, Val-232, and Ser-244 contribute to the NADP(+) site. Residue Lys-206 is the Proton donor of the active site.

It belongs to the NAD(P)-dependent epimerase/dehydratase family. In terms of assembly, monomer. Mainly present in cell elongating-containing tissues. Strongly expressed in roots and flowers, also observed in petioles, stems, leaves and siliques.

The protein resides in the cytoplasm. The protein operates within plant hormone biosynthesis; brassinosteroid biosynthesis. Functionally, element of the brassinosteroid metabolic pathway that regulates typhasterol (TY), castasterone (CS) and brassinolide (BL) levels. Involved in the control of organ elongation. This is Protein BRI1-5 ENHANCED 1 from Arabidopsis thaliana (Mouse-ear cress).